Here is a 227-residue protein sequence, read N- to C-terminus: Cytochrome c oxidase subunit 2 (227 aa).

The Mitochondrial intermembrane segment spans residues 1-14; sequence MAYPFQLGLQDATS. Residues 15 to 45 traverse the membrane as a helical segment; the sequence is PIMEELTNFHDHTLMIVFLISSLVLYLISLM. The Mitochondrial matrix portion of the chain corresponds to 46–59; the sequence is LTTKLIHTNTMDAQ. A helical membrane pass occupies residues 60-87; it reads EVETVWTILPAIILIMIALPSLRILYLM. The Mitochondrial intermembrane segment spans residues 88–227; it reads DEINNPVLTV…LFENWSTSMI (140 aa). His161, Cys196, Glu198, Cys200, His204, and Met207 together coordinate Cu cation. A Mg(2+)-binding site is contributed by Glu198.

Belongs to the cytochrome c oxidase subunit 2 family. Component of the cytochrome c oxidase (complex IV, CIV), a multisubunit enzyme composed of 14 subunits. The complex is composed of a catalytic core of 3 subunits MT-CO1, MT-CO2 and MT-CO3, encoded in the mitochondrial DNA, and 11 supernumerary subunits COX4I, COX5A, COX5B, COX6A, COX6B, COX6C, COX7A, COX7B, COX7C, COX8 and NDUFA4, which are encoded in the nuclear genome. The complex exists as a monomer or a dimer and forms supercomplexes (SCs) in the inner mitochondrial membrane with NADH-ubiquinone oxidoreductase (complex I, CI) and ubiquinol-cytochrome c oxidoreductase (cytochrome b-c1 complex, complex III, CIII), resulting in different assemblies (supercomplex SCI(1)III(2)IV(1) and megacomplex MCI(2)III(2)IV(2)). Found in a complex with TMEM177, COA6, COX18, COX20, SCO1 and SCO2. Interacts with TMEM177 in a COX20-dependent manner. Interacts with COX20. Interacts with COX16. Requires Cu cation as cofactor.

It is found in the mitochondrion inner membrane. The catalysed reaction is 4 Fe(II)-[cytochrome c] + O2 + 8 H(+)(in) = 4 Fe(III)-[cytochrome c] + 2 H2O + 4 H(+)(out). Its function is as follows. Component of the cytochrome c oxidase, the last enzyme in the mitochondrial electron transport chain which drives oxidative phosphorylation. The respiratory chain contains 3 multisubunit complexes succinate dehydrogenase (complex II, CII), ubiquinol-cytochrome c oxidoreductase (cytochrome b-c1 complex, complex III, CIII) and cytochrome c oxidase (complex IV, CIV), that cooperate to transfer electrons derived from NADH and succinate to molecular oxygen, creating an electrochemical gradient over the inner membrane that drives transmembrane transport and the ATP synthase. Cytochrome c oxidase is the component of the respiratory chain that catalyzes the reduction of oxygen to water. Electrons originating from reduced cytochrome c in the intermembrane space (IMS) are transferred via the dinuclear copper A center (CU(A)) of subunit 2 and heme A of subunit 1 to the active site in subunit 1, a binuclear center (BNC) formed by heme A3 and copper B (CU(B)). The BNC reduces molecular oxygen to 2 water molecules using 4 electrons from cytochrome c in the IMS and 4 protons from the mitochondrial matrix. The polypeptide is Cytochrome c oxidase subunit 2 (MT-CO2) (Gerbillurus vallinus (Brush-tailed hairy-footed gerbil)).